Here is a 237-residue protein sequence, read N- to C-terminus: Ubiquitin-conjugating enzyme E2 34 (237 aa).

In terms of domain architecture, UBC core spans 5–162 (ACIKRLQKEY…FPEYVEKYNQ (158 aa)). The active-site Glycyl thioester intermediate is the Cys87. Residues 168–207 (QATTQLTTPESPQKSDTKVESEKTIDPTKGDSEGGLKERK) form a disordered region. Residues 180–204 (QKSDTKVESEKTIDPTKGDSEGGLK) show a composition bias toward basic and acidic residues. Residues 214–234 (LPAWIILLLVSVFGVVMALPL) form a helical membrane-spanning segment.

Belongs to the ubiquitin-conjugating enzyme family.

The protein resides in the membrane. It catalyses the reaction S-ubiquitinyl-[E1 ubiquitin-activating enzyme]-L-cysteine + [E2 ubiquitin-conjugating enzyme]-L-cysteine = [E1 ubiquitin-activating enzyme]-L-cysteine + S-ubiquitinyl-[E2 ubiquitin-conjugating enzyme]-L-cysteine.. It participates in protein modification; protein ubiquitination. Its function is as follows. Accepts the ubiquitin from the E1 complex and catalyzes its covalent attachment to other proteins. This Arabidopsis thaliana (Mouse-ear cress) protein is Ubiquitin-conjugating enzyme E2 34 (UBC34).